Consider the following 682-residue polypeptide: Beta-galactosidase (682 aa).

An N-terminal signal peptide occupies residues 1–23; that stretch reads MPGFLVRILPLLLPLLLLGPTRG. A propeptide spanning residues 24 to 28 is cleaved from the precursor; sequence LRNAT. N-linked (GlcNAc...) asparagine glycosylation occurs at Asn-26. Residues Tyr-83, Glu-129, and Asn-187 each coordinate substrate. Catalysis depends on Glu-188, which acts as the Proton donor. Cys-195 and Cys-230 are oxidised to a cystine. N-linked (GlcNAc...) asparagine glycosylation occurs at Asn-247. Glu-268 serves as the catalytic Nucleophile. Tyr-333 serves as a coordination point for substrate. Residues Asn-464, Asn-498, Asn-545, and Asn-555 are each glycosylated (N-linked (GlcNAc...) asparagine). A disulfide bridge links Cys-626 with Cys-634.

Belongs to the glycosyl hydrolase 35 family. In terms of assembly, homodimer. May form higher multimers.

It localises to the lysosome. The enzyme catalyses Hydrolysis of terminal non-reducing beta-D-galactose residues in beta-D-galactosides.. Functionally, cleaves beta-linked terminal galactosyl residues from gangliosides, glycoproteins, and glycosaminoglycans. In Macaca fascicularis (Crab-eating macaque), this protein is Beta-galactosidase (GLB1).